A 1824-amino-acid chain; its full sequence is Treslin (1824 aa).

10 disordered regions span residues 542–572 (EFYQ…QKMK), 590–622 (AQKT…KPGL), 907–973 (SPSK…SGES), 1001–1035 (RHSS…KGKF), 1098–1117 (AVGC…VGDN), 1189–1221 (VPEN…SPEE), 1293–1388 (PFCN…DDDK), 1459–1518 (FEGK…QSSP), 1617–1650 (TPTH…NLNS), and 1803–1824 (PLCQ…KLLD). Residues 546–555 (SSTAGSSGSL) are compositionally biased toward low complexity. A compositionally biased stretch (polar residues) spans 562–572 (TQCTPVRQKMK). Positions 605-619 (GTEKGGKKSSGDRTK) are enriched in basic and acidic residues. Positions 907–921 (SPSKKSKMPRSQSVS) are enriched in polar residues. Positions 932-952 (SDVDNDDRHTLLTKKVSETPL) are enriched in basic and acidic residues. Polar residues-rich tracts occupy residues 1005–1014 (VFYSSSQPRS) and 1103–1114 (TPQSPRTPNRTV). Residues 1319–1345 (RSGNTPVKESCSPSSNSQGITGTSPSP) show a composition bias toward polar residues. A compositionally biased stretch (low complexity) spans 1347 to 1370 (KSLSSAVAKSSPSPSFGPSRSGVG). The span at 1462–1472 (KQTTSTGTPLT) shows a compositional bias: polar residues. Over residues 1480 to 1490 (TPDRRQREAEA) the composition is skewed to basic and acidic residues. 2 stretches are compositionally biased toward polar residues: residues 1617–1629 (TPTH…QSPL) and 1636–1650 (SPQS…NLNS). Positions 1807-1824 (PRRRRTPSRTYSRKKLLD) are enriched in basic residues.

This sequence belongs to the treslin family. As to quaternary structure, interacts with topbp1 (via BRCT domains); interaction takes place in a cdk2-dependent manner. Component of the replisome complex.

It is found in the nucleus. Functionally, regulator of DNA replication and S/M and G2/M checkpoints. Regulates the triggering of DNA replication initiation via its interaction with topbp1 by participating in cdk2-mediated loading of cdc45l onto replication origins. Required for the transition from pre-replication complex (pre-RC) to pre-initiation complex (pre-IC). Required to prevent mitotic entry after treatment with ionizing radiation. The sequence is that of Treslin (ticrr) from Danio rerio (Zebrafish).